Here is a 1649-residue protein sequence, read N- to C-terminus: DNA-directed RNA polymerase subunit beta' (1649 aa).

Residues cysteine 62, cysteine 64, cysteine 77, and cysteine 80 each coordinate Zn(2+). Residues aspartate 746, aspartate 748, and aspartate 750 each coordinate Mg(2+). Zn(2+)-binding residues include cysteine 1077, cysteine 1268, cysteine 1275, and cysteine 1278.

The protein belongs to the RNA polymerase beta' chain family. As to quaternary structure, the RNAP catalytic core consists of 2 alpha, 1 beta, 1 beta' and 1 omega subunit. When a sigma factor is associated with the core the holoenzyme is formed, which can initiate transcription. Requires Mg(2+) as cofactor. Zn(2+) is required as a cofactor.

The catalysed reaction is RNA(n) + a ribonucleoside 5'-triphosphate = RNA(n+1) + diphosphate. DNA-dependent RNA polymerase catalyzes the transcription of DNA into RNA using the four ribonucleoside triphosphates as substrates. In Thermosipho africanus (strain TCF52B), this protein is DNA-directed RNA polymerase subunit beta'.